Here is a 343-residue protein sequence, read N- to C-terminus: NADH-quinone oxidoreductase subunit H (343 aa).

The next 8 membrane-spanning stretches (helical) occupy residues 19 to 39, 89 to 109, 124 to 144, 158 to 178, 198 to 218, 257 to 277, 279 to 299, and 314 to 334; these read VAWT…GVAY, ALFI…WAVI, LLYV…AGWA, AAQI…VLMA, WYLW…VAET, ILVA…PVAF, PDGI…FLWF, and LGWK…GGMM.

Belongs to the complex I subunit 1 family. NDH-1 is composed of 14 different subunits. Subunits NuoA, H, J, K, L, M, N constitute the membrane sector of the complex.

It is found in the cell inner membrane. The catalysed reaction is a quinone + NADH + 5 H(+)(in) = a quinol + NAD(+) + 4 H(+)(out). Its function is as follows. NDH-1 shuttles electrons from NADH, via FMN and iron-sulfur (Fe-S) centers, to quinones in the respiratory chain. The immediate electron acceptor for the enzyme in this species is believed to be ubiquinone. Couples the redox reaction to proton translocation (for every two electrons transferred, four hydrogen ions are translocated across the cytoplasmic membrane), and thus conserves the redox energy in a proton gradient. This subunit may bind ubiquinone. The sequence is that of NADH-quinone oxidoreductase subunit H from Thiobacillus denitrificans (strain ATCC 25259 / T1).